The sequence spans 169 residues: TPD1 protein homolog 1B (169 aa).

The N-terminal stretch at 1 to 25 (MADCTTMRLASSVTIILLLLVASQA) is a signal peptide.

Expressed in roots, and at low levels in anthers during meiosis.

Functionally, may play a role during anther development. In Oryza sativa subsp. japonica (Rice), this protein is TPD1 protein homolog 1B.